Here is a 562-residue protein sequence, read N- to C-terminus: Glycine betaine/proline/choline/ectoine transporter VP1456 (562 aa).

The next 12 membrane-spanning stretches (helical) occupy residues 68-88 (PVFG…LLVE), 110-130 (FFMW…FSPL), 147-167 (VSWL…FWSV), 203-223 (WGVH…FFAF), 243-263 (AWGW…LFGL), 287-307 (GIGT…LSVV), 322-342 (MIVA…TAMG), 373-393 (WTVF…MFIA), 404-424 (FLFA…SVFG), 456-476 (VLPY…VFFI), 503-523 (IFWA…GGKE), and 531-551 (GVVA…VSLV).

The protein belongs to the BCCT transporter (TC 2.A.15) family.

The protein resides in the cell inner membrane. Involved in the uptake of osmoprotectants. Can transport glycine betaine, proline, choline and ectoine. This chain is Glycine betaine/proline/choline/ectoine transporter VP1456, found in Vibrio parahaemolyticus serotype O3:K6 (strain RIMD 2210633).